A 96-amino-acid chain; its full sequence is ATP-dependent Clp protease adapter protein ClpS (96 aa).

The protein belongs to the ClpS family. As to quaternary structure, binds to the N-terminal domain of the chaperone ClpA.

In terms of biological role, involved in the modulation of the specificity of the ClpAP-mediated ATP-dependent protein degradation. The chain is ATP-dependent Clp protease adapter protein ClpS from Campylobacter jejuni subsp. jejuni serotype O:6 (strain 81116 / NCTC 11828).